The sequence spans 171 residues: Small ribosomal subunit protein uS5 (171 aa).

Positions Leu16–Val79 constitute an S5 DRBM domain.

Belongs to the universal ribosomal protein uS5 family. In terms of assembly, part of the 30S ribosomal subunit. Contacts proteins S4 and S8.

With S4 and S12 plays an important role in translational accuracy. Functionally, located at the back of the 30S subunit body where it stabilizes the conformation of the head with respect to the body. The chain is Small ribosomal subunit protein uS5 from Psychrobacter arcticus (strain DSM 17307 / VKM B-2377 / 273-4).